The sequence spans 220 residues: Uracil-DNA glycosylase 2 (220 aa).

Catalysis depends on D65, which acts as the Proton acceptor.

Belongs to the uracil-DNA glycosylase (UDG) superfamily. UNG family.

The protein localises to the cytoplasm. The enzyme catalyses Hydrolyzes single-stranded DNA or mismatched double-stranded DNA and polynucleotides, releasing free uracil.. Functionally, excises uracil residues from the DNA which can arise as a result of misincorporation of dUMP residues by DNA polymerase or due to deamination of cytosine. This chain is Uracil-DNA glycosylase 2, found in Bacteroides fragilis (strain ATCC 25285 / DSM 2151 / CCUG 4856 / JCM 11019 / LMG 10263 / NCTC 9343 / Onslow / VPI 2553 / EN-2).